We begin with the raw amino-acid sequence, 232 residues long: Sugar fermentation stimulation protein homolog (232 aa).

It belongs to the SfsA family.

This Alkaliphilus metalliredigens (strain QYMF) protein is Sugar fermentation stimulation protein homolog.